A 159-amino-acid chain; its full sequence is Ribosomal RNA large subunit methyltransferase H (159 aa).

Residues L76, G108, and 127 to 132 (FGRLTL) each bind S-adenosyl-L-methionine.

It belongs to the RNA methyltransferase RlmH family. In terms of assembly, homodimer.

Its subcellular location is the cytoplasm. The catalysed reaction is pseudouridine(1915) in 23S rRNA + S-adenosyl-L-methionine = N(3)-methylpseudouridine(1915) in 23S rRNA + S-adenosyl-L-homocysteine + H(+). Functionally, specifically methylates the pseudouridine at position 1915 (m3Psi1915) in 23S rRNA. This Listeria welshimeri serovar 6b (strain ATCC 35897 / DSM 20650 / CCUG 15529 / CIP 8149 / NCTC 11857 / SLCC 5334 / V8) protein is Ribosomal RNA large subunit methyltransferase H.